The primary structure comprises 83 residues: RNA-binding protein Hfq (83 aa).

The 61-residue stretch at 10–70 (DAFLNQLRKE…ISTVSPSRPV (61 aa)) folds into the Sm domain.

The protein belongs to the Hfq family. As to quaternary structure, homohexamer.

Its function is as follows. RNA chaperone that binds small regulatory RNA (sRNAs) and mRNAs to facilitate mRNA translational regulation in response to envelope stress, environmental stress and changes in metabolite concentrations. Also binds with high specificity to tRNAs. This chain is RNA-binding protein Hfq, found in Desulforudis audaxviator (strain MP104C).